The following is a 118-amino-acid chain: UPF0102 protein RSal33209_1090 (118 aa).

Belongs to the UPF0102 family.

The sequence is that of UPF0102 protein RSal33209_1090 from Renibacterium salmoninarum (strain ATCC 33209 / DSM 20767 / JCM 11484 / NBRC 15589 / NCIMB 2235).